The primary structure comprises 343 residues: MKRKCQDYESRLPDNTAVKQQQLPAFRLQLTASEILSGFFAIGLFCLGMGIILLLSAKSIKEVEINYTEKCATCAKLREEATNFDKECNCSISFYLPQKMEGNVYLYYKLYGFYQNLYRYILSRSNIQLVGADVKDVRNCAPFRTSDNGLPIAPCGAIANSMFNDTIVLWYNFNSSTHIRVPMVRTETAWWTDKYVKFQNPAFQNLSSAFAGTAKPPNWPKPVYELDENDPGNNGFINDDFIVWMRTAAFPNFKKLYRRLHRIGNFTEGLPAGSYSFIINYNFPVSRFQGQKAVVLSTLTWSGGSSLFLALAYLVTGAVTLLASFSMMALHLKLKERKTFFLQ.

Over 1-34 (MKRKCQDYESRLPDNTAVKQQQLPAFRLQLTASE) the chain is Cytoplasmic. Residues 35–55 (ILSGFFAIGLFCLGMGIILLL) traverse the membrane as a helical segment. Residues 56-306 (SAKSIKEVEI…STLTWSGGSS (251 aa)) lie on the Extracellular side of the membrane. Residues N66, N164, N205, and N265 are each glycosylated (N-linked (GlcNAc...) asparagine). Residues 307-327 (LFLALAYLVTGAVTLLASFSM) traverse the membrane as a helical segment. At 328-343 (MALHLKLKERKTFFLQ) the chain is on the cytoplasmic side.

The protein belongs to the CDC50/LEM3 family.

The protein localises to the membrane. This Bos taurus (Bovine) protein is Cell cycle control protein 50C (TMEM30C).